Reading from the N-terminus, the 128-residue chain is Large ribosomal subunit protein bL20c (128 aa).

The protein belongs to the bacterial ribosomal protein bL20 family.

It localises to the plastid. Its subcellular location is the chloroplast. Functionally, binds directly to 23S ribosomal RNA and is necessary for the in vitro assembly process of the 50S ribosomal subunit. It is not involved in the protein synthesizing functions of that subunit. The chain is Large ribosomal subunit protein bL20c from Trachelium caeruleum (Blue throatwort).